The chain runs to 952 residues: Aminopeptidase 2, mitochondrial (952 aa).

A mitochondrion-targeting transit peptide spans 1–52 (MPIVRWLLLKSAVRGSSLIGKAHPCLRSIAAHPRYLSNVYSPPAGVSRSLRI). Substrate-binding positions include glutamate 228 and 360–364 (GAMEN). Asparagine 381 is a glycosylation site (N-linked (GlcNAc...) asparagine). Histidine 396 provides a ligand contact to Zn(2+). The active-site Proton acceptor is glutamate 397. Zn(2+) contacts are provided by histidine 400 and glutamate 419. Residue asparagine 713 is glycosylated (N-linked (GlcNAc...) asparagine).

Belongs to the peptidase M1 family. The cofactor is Zn(2+).

The protein localises to the periplasm. Its subcellular location is the cytoplasm. The protein resides in the mitochondrion. In terms of biological role, involved in the cellular supply of leucine from externally offered leucine-containing dipeptide substrates. In Saccharomyces cerevisiae (strain ATCC 204508 / S288c) (Baker's yeast), this protein is Aminopeptidase 2, mitochondrial (APE2).